Reading from the N-terminus, the 163-residue chain is Cyanate hydratase (163 aa).

Catalysis depends on residues Arg-103, Glu-106, and Ser-129.

This sequence belongs to the cyanase family.

The catalysed reaction is cyanate + hydrogencarbonate + 3 H(+) = NH4(+) + 2 CO2. Functionally, catalyzes the reaction of cyanate with bicarbonate to produce ammonia and carbon dioxide. The sequence is that of Cyanate hydratase from Ajellomyces dermatitidis (strain ER-3 / ATCC MYA-2586) (Blastomyces dermatitidis).